A 229-amino-acid chain; its full sequence is Peptidyl-prolyl cis-trans isomerase FKBP17-1, chloroplastic (229 aa).

The N-terminal 63 residues, Met1–Thr63, are a transit peptide targeting the chloroplast. The 121-residue stretch at Gly105–Arg225 folds into the PPIase FKBP-type domain.

This sequence belongs to the FKBP-type PPIase family.

It is found in the plastid. Its subcellular location is the chloroplast thylakoid lumen. The enzyme catalyses [protein]-peptidylproline (omega=180) = [protein]-peptidylproline (omega=0). Its function is as follows. PPIases accelerate the folding of proteins. It catalyzes the cis-trans isomerization of proline imidic peptide bonds in oligopeptides. This chain is Peptidyl-prolyl cis-trans isomerase FKBP17-1, chloroplastic (FKBP17-1), found in Arabidopsis thaliana (Mouse-ear cress).